The sequence spans 51 residues: Probable antitoxin PhoAT (51 aa).

This sequence belongs to the PhoAT antitoxin family. As to quaternary structure, interacts with toxin PhoH2.

In terms of biological role, antitoxin component of a type II toxin-antitoxin (TA) system. The cognate antitoxin is PhoAT; the toxin gene cannot be expressed in the absence of the antitoxin gene in M.smegmatis (strain mc(2)4517), and abrogates the toxic effects of PhoH2 in M.smegmatis strain mc(2)155. This is Probable antitoxin PhoAT from Mycobacterium tuberculosis (strain ATCC 25618 / H37Rv).